Here is a 163-residue protein sequence, read N- to C-terminus: MAAAVLLAVGLRAARRTLAAAGARGAQVRGNAGVSDGSEVAKAQKAAPGGASPTIFSRILDRSLPADILYEDQQCLVFRDVAPQAPVHFLVIPRKPIPRISQAEEDDQQLLGHLLLVAKKIAQAQGLKDGYRLVVNDGKMGAQSVYHLHIHVLGGRQLQWPPG.

Residues 1 to 17 (MAAAVLLAVGLRAARRT) constitute a mitochondrion transit peptide. At Lys-45 the chain carries N6-succinyllysine. In terms of domain architecture, HIT spans 55–163 (IFSRILDRSL…GGRQLQWPPG (109 aa)). AMP contacts are provided by Ser-63 and Asp-80. Lys-119 bears the N6-acetyllysine mark. Residue Lys-128 is modified to N6-acetyllysine; alternate. At Lys-128 the chain carries N6-succinyllysine; alternate. Residue Asn-136 coordinates AMP. At Lys-139 the chain carries N6-acetyllysine. Residues 142–145 (AQSV) and 149–151 (HIH) each bind AMP. A Histidine triad motif motif is present at residues 147 to 151 (HLHIH). His-149 functions as the Tele-AMP-histidine intermediate in the catalytic mechanism.

Belongs to the HINT family.

It is found in the mitochondrion. It catalyses the reaction adenosine 5'-phosphoramidate + H2O = AMP + NH4(+). In terms of biological role, exhibits adenosine 5'-monophosphoramidase activity, hydrolyzing purine nucleotide phosphoramidates with a single phosphate group such as adenosine 5'monophosphoramidate (AMP-NH2) to yield AMP and NH2. Hydrolyzes adenosine 5'-O-p-nitrophenylphosphoramidate (AMP-pNA). May be involved in steroid biosynthesis. May play a role in apoptosis. The sequence is that of Adenosine 5'-monophosphoramidase HINT2 from Mus musculus (Mouse).